We begin with the raw amino-acid sequence, 326 residues long: Peroxidase 43 (326 aa).

The first 24 residues, 1–24, serve as a signal peptide directing secretion; the sequence is MVWANAKMRLALSLVTVFFGISLA. 4 disulfides stabilise this stretch: Cys-35–Cys-112, Cys-68–Cys-73, Cys-118–Cys-322, and Cys-196–Cys-228. His-66 (proton acceptor) is an active-site residue. Residues Asp-67, Val-70, Gly-72, Asp-74, and Ser-76 each coordinate Ca(2+). An N-linked (GlcNAc...) asparagine glycan is attached at Asn-151. Substrate is bound at residue Pro-159. His-189 provides a ligand contact to heme b. Ca(2+) is bound at residue Thr-190. The Ca(2+) site is built by Asp-241, Ser-244, and Asp-249.

It belongs to the peroxidase family. Classical plant (class III) peroxidase subfamily. The cofactor is heme b. Requires Ca(2+) as cofactor.

It localises to the secreted. It carries out the reaction 2 a phenolic donor + H2O2 = 2 a phenolic radical donor + 2 H2O. Removal of H(2)O(2), oxidation of toxic reductants, biosynthesis and degradation of lignin, suberization, auxin catabolism, response to environmental stresses such as wounding, pathogen attack and oxidative stress. These functions might be dependent on each isozyme/isoform in each plant tissue. The sequence is that of Peroxidase 43 (PER43) from Arabidopsis thaliana (Mouse-ear cress).